We begin with the raw amino-acid sequence, 480 residues long: Uridine 5'-monophosphate synthase (480 aa).

At A2 the chain carries N-acetylalanine. The OPRTase stretch occupies residues 2–214 (AAVGAALGPL…VFVAANHNGS (213 aa)). Y37 carries the phosphotyrosine modification. S214 bears the Phosphoserine mark. The interval 215-220 (PLSIKE) is domain linker. Residues 221–480 (APKELSFSAR…WEAYLSRLGV (260 aa)) are OMPdecase. Residue S257 participates in orotidine 5'-phosphate binding. UMP contacts are provided by residues S257, D259, and 281–283 (KTH). Orotidine 5'-phosphate contacts are provided by residues K281, K314, D317, T321, S372, 430–432 (QQY), and 450–451 (GR). Active-site for OMPdecase activity residues include K314 and D317. Residues D317, T321, S372, 430–432 (QQY), and 450–451 (GR) each bind UMP.

In the N-terminal section; belongs to the purine/pyrimidine phosphoribosyltransferase family. It in the C-terminal section; belongs to the OMP decarboxylase family. Homodimer; dimerization is required for enzymatic activity.

The catalysed reaction is orotidine 5'-phosphate + diphosphate = orotate + 5-phospho-alpha-D-ribose 1-diphosphate. It carries out the reaction orotidine 5'-phosphate + H(+) = UMP + CO2. It participates in pyrimidine metabolism; UMP biosynthesis via de novo pathway; UMP from orotate: step 1/2. The protein operates within pyrimidine metabolism; UMP biosynthesis via de novo pathway; UMP from orotate: step 2/2. Functionally, bifunctional enzyme catalyzing the last two steps of de novo pyrimidine biosynthesis, orotate phosphoribosyltransferase (OPRT), which converts orotate to orotidine-5'-monophosphate (OMP), and orotidine-5'-monophosphate decarboxylase (ODC), the terminal enzymatic reaction that decarboxylates OMP to uridine monophosphate (UMP). The polypeptide is Uridine 5'-monophosphate synthase (UMPS) (Pongo abelii (Sumatran orangutan)).